The sequence spans 489 residues: Glycogen synthase (489 aa).

Residue arginine 20 coordinates ADP-alpha-D-glucose.

Belongs to the glycosyltransferase 1 family. Bacterial/plant glycogen synthase subfamily.

The catalysed reaction is [(1-&gt;4)-alpha-D-glucosyl](n) + ADP-alpha-D-glucose = [(1-&gt;4)-alpha-D-glucosyl](n+1) + ADP + H(+). It participates in glycan biosynthesis; glycogen biosynthesis. Functionally, synthesizes alpha-1,4-glucan chains using ADP-glucose. The sequence is that of Glycogen synthase from Chlorobium phaeobacteroides (strain DSM 266 / SMG 266 / 2430).